The chain runs to 263 residues: Phosphatidylglycerol--prolipoprotein diacylglyceryl transferase (263 aa).

The next 4 helical transmembrane spans lie at 15-35 (ISIHWYAICIVSGLLLAVYLA), 52-72 (FILLAFPIAIVGARLYYVIFQ), 83-103 (IFAIWNGGIAIYGGLIAGAAV), and 112-132 (AIAVLDFLDIAAPGVMIAQSI). A 1,2-diacyl-sn-glycero-3-phospho-(1'-sn-glycerol) is bound at residue Arg-134. Helical transmembrane passes span 170 to 190 (VPTFLYESLWNLVGFSIILGL), 200 to 220 (GDVTSFYLIWYGLGRFVIEGM), and 227 to 247 (FVGLRVSQWVSISIIILGAVL).

This sequence belongs to the Lgt family.

The protein resides in the cell membrane. It catalyses the reaction L-cysteinyl-[prolipoprotein] + a 1,2-diacyl-sn-glycero-3-phospho-(1'-sn-glycerol) = an S-1,2-diacyl-sn-glyceryl-L-cysteinyl-[prolipoprotein] + sn-glycerol 1-phosphate + H(+). Its pathway is protein modification; lipoprotein biosynthesis (diacylglyceryl transfer). Functionally, catalyzes the transfer of the diacylglyceryl group from phosphatidylglycerol to the sulfhydryl group of the N-terminal cysteine of a prolipoprotein, the first step in the formation of mature lipoproteins. The chain is Phosphatidylglycerol--prolipoprotein diacylglyceryl transferase from Streptococcus thermophilus (strain CNRZ 1066).